The primary structure comprises 330 residues: NADH-quinone oxidoreductase subunit H (330 aa).

The next 8 helical transmembrane spans lie at 11–31 (ILVA…CGAL), 81–101 (FIFV…FAII), 114–134 (IGIL…LFAG), 154–174 (ISYE…VGSF), 187–207 (LWFI…GVAV), 238–258 (FFVG…TLFF), 270–290 (QIPF…FILL), and 309–329 (FCLP…LAAA).

Belongs to the complex I subunit 1 family. In terms of assembly, NDH-1 is composed of 13 different subunits. Subunits NuoA, H, J, K, L, M, N constitute the membrane sector of the complex.

The protein resides in the cell inner membrane. It catalyses the reaction a quinone + NADH + 5 H(+)(in) = a quinol + NAD(+) + 4 H(+)(out). In terms of biological role, NDH-1 shuttles electrons from NADH, via FMN and iron-sulfur (Fe-S) centers, to quinones in the respiratory chain. The immediate electron acceptor for the enzyme in this species is believed to be ubiquinone. Couples the redox reaction to proton translocation (for every two electrons transferred, four hydrogen ions are translocated across the cytoplasmic membrane), and thus conserves the redox energy in a proton gradient. This subunit may bind ubiquinone. The protein is NADH-quinone oxidoreductase subunit H of Ectopseudomonas mendocina (strain ymp) (Pseudomonas mendocina).